Consider the following 205-residue polypeptide: Glycerol-3-phosphate acyltransferase (205 aa).

A run of 6 helical transmembrane segments spans residues 8 to 28 (IALFTLLVSYLLGSLPSGYLA), 57 to 77 (TPALFVFFIDVTKGIGAILIA), 84 to 104 (ESLQIAAGLASLSGHIWPVWL), 118 to 138 (VFLGISWQVGLGSLGIFLLIL), 143 to 163 (IVSLASISAAISLPVLMLINS), and 164 to 184 (KETFSIPYIVISFIAMILVLW).

The protein belongs to the PlsY family. Probably interacts with PlsX.

The protein localises to the cell inner membrane. The enzyme catalyses an acyl phosphate + sn-glycerol 3-phosphate = a 1-acyl-sn-glycero-3-phosphate + phosphate. Its pathway is lipid metabolism; phospholipid metabolism. Functionally, catalyzes the transfer of an acyl group from acyl-phosphate (acyl-PO(4)) to glycerol-3-phosphate (G3P) to form lysophosphatidic acid (LPA). This enzyme utilizes acyl-phosphate as fatty acyl donor, but not acyl-CoA or acyl-ACP. In Prochlorococcus marinus (strain SARG / CCMP1375 / SS120), this protein is Glycerol-3-phosphate acyltransferase.